Reading from the N-terminus, the 931-residue chain is Protocadherin gamma-B2 (931 aa).

A signal peptide spans 1 to 30 (MKASSGRCGLVRWLQVLLPFLLSLFPGALP). Cadherin domains follow at residues 31–133 (VQIR…TPLF), 134–242 (KQTK…PPVF), 243–347 (SQDV…APEV), 348–452 (IVTS…APVF), 453–562 (QQTS…APRV), and 570–675 (DGSA…LPDL). At 31–691 (VQIRYSIPEE…SDPQAKLQFY (661 aa)) the chain is on the extracellular side. Residues Asn419 and Asn545 are each glycosylated (N-linked (GlcNAc...) asparagine). A helical transmembrane segment spans residues 692–712 (LVVALALISVLFFLAVILAIS). At 713–931 (LRLRLSSRSD…KKKSGKKEKK (219 aa)) the chain is on the cytoplasmic side. Disordered regions lie at residues 814–840 (DWRF…WPNN) and 901–931 (ATLT…KEKK). Positions 815-840 (WRFSQAQRPGTSGSQNGDDTGTWPNN) are enriched in polar residues. A compositionally biased stretch (basic residues) spans 921–931 (NKKKSGKKEKK).

It is found in the cell membrane. In terms of biological role, potential calcium-dependent cell-adhesion protein. May be involved in the establishment and maintenance of specific neuronal connections in the brain. This chain is Protocadherin gamma-B2 (PCDHGB2), found in Homo sapiens (Human).